A 99-amino-acid polypeptide reads, in one-letter code: NADH-quinone oxidoreductase subunit K (99 aa).

The next 3 membrane-spanning stretches (helical) occupy residues 3–23 (PDNY…GVLL), 28–48 (IVVF…FVAF), and 59–79 (VVAF…LAII).

Belongs to the complex I subunit 4L family. In terms of assembly, NDH-1 is composed of 14 different subunits. Subunits NuoA, H, J, K, L, M, N constitute the membrane sector of the complex.

The protein resides in the cell membrane. It catalyses the reaction a quinone + NADH + 5 H(+)(in) = a quinol + NAD(+) + 4 H(+)(out). In terms of biological role, NDH-1 shuttles electrons from NADH, via FMN and iron-sulfur (Fe-S) centers, to quinones in the respiratory chain. The immediate electron acceptor for the enzyme in this species is believed to be a menaquinone. Couples the redox reaction to proton translocation (for every two electrons transferred, four hydrogen ions are translocated across the cytoplasmic membrane), and thus conserves the redox energy in a proton gradient. The chain is NADH-quinone oxidoreductase subunit K from Mycobacterium sp. (strain JLS).